Reading from the N-terminus, the 156-residue chain is Ribosomal RNA large subunit methyltransferase H (156 aa).

Residues Leu-73, Gly-104, and 123-128 (LSRLTL) each bind S-adenosyl-L-methionine.

The protein belongs to the RNA methyltransferase RlmH family. Homodimer.

Its subcellular location is the cytoplasm. It carries out the reaction pseudouridine(1915) in 23S rRNA + S-adenosyl-L-methionine = N(3)-methylpseudouridine(1915) in 23S rRNA + S-adenosyl-L-homocysteine + H(+). Functionally, specifically methylates the pseudouridine at position 1915 (m3Psi1915) in 23S rRNA. In Thiobacillus denitrificans (strain ATCC 25259 / T1), this protein is Ribosomal RNA large subunit methyltransferase H.